We begin with the raw amino-acid sequence, 186 residues long: DNA-directed RNA polymerase 22 kDa subunit (186 aa).

This sequence belongs to the poxviridae DNA-directed RNA polymerase 22 kDa subunit family. As to quaternary structure, the DNA-dependent RNA polymerase used for intermediate and late genes expression consists of eight subunits Rpo30/OPG66, Rpo7/OPG90, Rpo22/OPG103, Rpo147/OPG105, Rpo18/OPG119, Rpo19/OPG131, Rpo132/OPG151 and Rpo35/OPG156. The same holoenzyme, with the addition of the transcription-specificity factor OPG109, is used for early gene expression.

The protein resides in the virion. It catalyses the reaction RNA(n) + a ribonucleoside 5'-triphosphate = RNA(n+1) + diphosphate. Its function is as follows. Part of the DNA-dependent RNA polymerase which catalyzes the transcription of viral DNA into RNA using the four ribonucleoside triphosphates as substrates. Responsible for the transcription of early, intermediate and late genes. DNA-dependent RNA polymerase associates with the early transcription factor (ETF), itself composed of OPG118 and OPG133, thereby allowing the early genes transcription. Late transcription, and probably also intermediate transcription, require newly synthesized RNA polymerase. The sequence is that of DNA-directed RNA polymerase 22 kDa subunit (OPG103) from Vertebrata (FPV).